A 111-amino-acid polypeptide reads, in one-letter code: uncharacterized protein (111 aa).

A run of 2 helical transmembrane segments spans residues 7–27 and 53–73; these read ILNI…SMMI and AFAM…TFLH.

The protein localises to the cell membrane. This is an uncharacterized protein from Bacillus anthracis.